The following is a 106-amino-acid chain: Large ribosomal subunit protein uL23 (106 aa).

This sequence belongs to the universal ribosomal protein uL23 family. Part of the 50S ribosomal subunit. Contacts protein L29, and trigger factor when it is bound to the ribosome.

In terms of biological role, one of the early assembly proteins it binds 23S rRNA. One of the proteins that surrounds the polypeptide exit tunnel on the outside of the ribosome. Forms the main docking site for trigger factor binding to the ribosome. In Neisseria meningitidis serogroup C / serotype 2a (strain ATCC 700532 / DSM 15464 / FAM18), this protein is Large ribosomal subunit protein uL23.